The sequence spans 920 residues: B3 domain-containing protein REM17 (920 aa).

3 consecutive DNA-binding regions (TF-B3) follow at residues 12–105 (NPHF…LGPS), 153–250 (RFVA…CRAK), and 267–361 (CFEG…LCPT). 3 disordered regions span residues 405 to 438 (DDDQ…SSFV), 540 to 562 (LACS…KNTS), and 585 to 614 (DDDQ…SSDH). A compositionally biased stretch (basic and acidic residues) spans 423–432 (NPREKVESSS). The TF-B3 4 DNA-binding region spans 436 to 531 (SFVGSVNPSS…NKPVLSLCPT (96 aa)). 2 DNA-binding regions (TF-B3) span residues 616 to 714 (SFVA…SLSE) and 727 to 823 (YFVG…LCPA). Residues 842 to 852 (NSLSSNPSSGD) are compositionally biased toward low complexity. The interval 842 to 870 (NSLSSNPSSGDDSSRSEESEEENMEDKNI) is disordered.

It localises to the nucleus. The protein is B3 domain-containing protein REM17 (REM17) of Arabidopsis thaliana (Mouse-ear cress).